A 374-amino-acid chain; its full sequence is tRNA-specific 2-thiouridylase MnmA (374 aa).

Residues 12–19 (GMSGGVDS) and M38 each bind ATP. An interaction with target base in tRNA region spans residues 98–100 (NPD). The active-site Nucleophile is C103. The cysteines at positions 103 and 200 are disulfide-linked. Residue G127 participates in ATP binding. The interval 150–152 (KDQ) is interaction with tRNA. C200 acts as the Cysteine persulfide intermediate in catalysis. Residues 311–312 (RY) form an interaction with tRNA region.

This sequence belongs to the MnmA/TRMU family.

It is found in the cytoplasm. It carries out the reaction S-sulfanyl-L-cysteinyl-[protein] + uridine(34) in tRNA + AH2 + ATP = 2-thiouridine(34) in tRNA + L-cysteinyl-[protein] + A + AMP + diphosphate + H(+). Functionally, catalyzes the 2-thiolation of uridine at the wobble position (U34) of tRNA, leading to the formation of s(2)U34. This Enterococcus faecalis (strain ATCC 700802 / V583) protein is tRNA-specific 2-thiouridylase MnmA.